A 389-amino-acid chain; its full sequence is COP9 signalosome complex subunit 11 (389 aa).

The region spanning 143–312 (QLIIDIPNLV…ILYQKFDPQM (170 aa)) is the PCI domain.

Component of a COP9 signalosome-like (CSN) complex.

Its subcellular location is the cytoplasm. The protein localises to the nucleus. Its function is as follows. Component of the COP9 signalosome (CSN) complex that acts as an regulator of the ubiquitin (Ubl) conjugation pathway by mediating the deneddylation of the cullin subunit of SCF-type E3 ubiquitin-protein ligase complexes The CSN complex is involved in the regulation of the mating pheromone response. PCI8 may also be involved in transcriptional and translational control. In Kluyveromyces lactis (strain ATCC 8585 / CBS 2359 / DSM 70799 / NBRC 1267 / NRRL Y-1140 / WM37) (Yeast), this protein is COP9 signalosome complex subunit 11 (PCI8).